Reading from the N-terminus, the 289-residue chain is Trihelix transcription factor GT-3b (289 aa).

The 57-residue stretch at tryptophan 42–valine 98 folds into the Myb-like domain. The short motif at lysine 65–lysine 81 is the Bipartite nuclear localization signal element. Positions glutamate 137 to valine 200 are disordered. Positions serine 156–valine 168 are enriched in acidic residues. The Nuclear localization signal signature appears at proline 179–lysine 188. A compositionally biased stretch (low complexity) spans glycine 190–glycine 199. Residues glutamate 223–leucine 275 adopt a coiled-coil conformation.

In terms of assembly, heterodimer with GT-3A. Associated with the mediator complex.

The protein localises to the nucleus. Its function is as follows. Probable transcription factor that may play a role in the induction of CAM4 in response to pathogen and salt. This Arabidopsis thaliana (Mouse-ear cress) protein is Trihelix transcription factor GT-3b (GT-3B).